The sequence spans 312 residues: Dihydroorotate dehydrogenase B (NAD(+)), catalytic subunit (312 aa).

Residues S23 and 47-48 (KA) each bind FMN. Substrate is bound by residues K47 and 71–75 (NAIGL). 2 residues coordinate FMN: N103 and N131. Substrate is bound at residue N131. The active-site Nucleophile is the C134. The FMN site is built by K171 and I197. 198–199 (NT) serves as a coordination point for substrate. Residues G223, 249-250 (GG), and 271-272 (GT) contribute to the FMN site.

It belongs to the dihydroorotate dehydrogenase family. Type 1 subfamily. As to quaternary structure, heterotetramer of 2 PyrK and 2 PyrD type B subunits. The cofactor is FMN.

Its subcellular location is the cytoplasm. The enzyme catalyses (S)-dihydroorotate + NAD(+) = orotate + NADH + H(+). It functions in the pathway pyrimidine metabolism; UMP biosynthesis via de novo pathway; orotate from (S)-dihydroorotate (NAD(+) route): step 1/1. Its function is as follows. Catalyzes the conversion of dihydroorotate to orotate with NAD(+) as electron acceptor. The chain is Dihydroorotate dehydrogenase B (NAD(+)), catalytic subunit (pyrDB) from Streptococcus pneumoniae serotype 4 (strain ATCC BAA-334 / TIGR4).